Here is a 349-residue protein sequence, read N- to C-terminus: N-acetyltaurine hydrolase (349 aa).

Positions 26, 28, 169, 201, 230, and 298 each coordinate a divalent metal cation.

It belongs to the metallo-dependent hydrolases superfamily. Phosphotriesterase family. Requires a divalent metal cation as cofactor.

The protein localises to the cytoplasm. It localises to the cytosol. It catalyses the reaction N-acetyltaurine + H2O = taurine + acetate. The enzyme catalyses N-propanoyltaurine + H2O = propanoate + taurine. The catalysed reaction is N-acetyl-L-methionine + H2O = L-methionine + acetate. It carries out the reaction N-acetyl-L-isoleucine + H2O = L-isoleucine + acetate. It catalyses the reaction N-acetyl-L-leucine + H2O = L-leucine + acetate. The enzyme catalyses N-acetyl-L-valine + H2O = L-valine + acetate. Its function is as follows. N-acetyltaurine hydrolase that catalyzes the hydrolysis of N-acetyltaurine into taurine and acetate. PTER also acts on other N-acetyl amino acids (Met, Ile, Leu, Val) and N-propionyltaurine, but at lower rates. The protein is N-acetyltaurine hydrolase (pter) of Xenopus tropicalis (Western clawed frog).